Here is a 192-residue protein sequence, read N- to C-terminus: UPF0312 protein PputGB1_5030 (192 aa).

An N-terminal signal peptide occupies residues M1 to A23.

Belongs to the UPF0312 family. Type 1 subfamily.

The protein localises to the periplasm. The sequence is that of UPF0312 protein PputGB1_5030 from Pseudomonas putida (strain GB-1).